A 303-amino-acid chain; its full sequence is mRNA-capping enzyme subunit beta (303 aa).

Belongs to the fungal TPase family. Heterodimer. The mRNA-capping enzyme is composed of two separate chains alpha and beta, respectively a mRNA guanylyltransferase and an mRNA 5'-triphosphate monophosphatase. The cofactor is Mg(2+).

The protein localises to the nucleus. It carries out the reaction a 5'-end triphospho-ribonucleoside in mRNA + H2O = a 5'-end diphospho-ribonucleoside in mRNA + phosphate + H(+). Functionally, first step of mRNA capping. Converts the 5'-triphosphate end of a nascent mRNA chain into a diphosphate end. The polypeptide is mRNA-capping enzyme subunit beta (pct1) (Schizosaccharomyces pombe (strain 972 / ATCC 24843) (Fission yeast)).